Here is a 420-residue protein sequence, read N- to C-terminus: UDP-N-acetylglucosamine 1-carboxyvinyltransferase (420 aa).

Phosphoenolpyruvate is bound at residue 22–23 (KN). UDP-N-acetyl-alpha-D-glucosamine is bound at residue R93. Catalysis depends on C117, which acts as the Proton donor. C117 is subject to 2-(S-cysteinyl)pyruvic acid O-phosphothioketal. UDP-N-acetyl-alpha-D-glucosamine-binding residues include D307 and I329.

This sequence belongs to the EPSP synthase family. MurA subfamily.

The protein localises to the cytoplasm. It carries out the reaction phosphoenolpyruvate + UDP-N-acetyl-alpha-D-glucosamine = UDP-N-acetyl-3-O-(1-carboxyvinyl)-alpha-D-glucosamine + phosphate. It functions in the pathway cell wall biogenesis; peptidoglycan biosynthesis. Cell wall formation. Adds enolpyruvyl to UDP-N-acetylglucosamine. The sequence is that of UDP-N-acetylglucosamine 1-carboxyvinyltransferase from Cellvibrio japonicus (strain Ueda107) (Pseudomonas fluorescens subsp. cellulosa).